A 143-amino-acid chain; its full sequence is Heat shock protein Hsp-16.48/Hsp-16.49 (143 aa).

Residues 35–140 (HNSFNFSDNI…SSRSIPINFV (106 aa)) form the sHSP domain.

This sequence belongs to the small heat shock protein (HSP20) family.

In Caenorhabditis elegans, this protein is Heat shock protein Hsp-16.48/Hsp-16.49 (hsp-16.48).